The chain runs to 141 residues: Large ribosomal subunit protein uL11 (141 aa).

It belongs to the universal ribosomal protein uL11 family. In terms of assembly, part of the ribosomal stalk of the 50S ribosomal subunit. Interacts with L10 and the large rRNA to form the base of the stalk. L10 forms an elongated spine to which L12 dimers bind in a sequential fashion forming a multimeric L10(L12)X complex. One or more lysine residues are methylated.

Forms part of the ribosomal stalk which helps the ribosome interact with GTP-bound translation factors. The polypeptide is Large ribosomal subunit protein uL11 (Geobacillus thermodenitrificans (strain NG80-2)).